The sequence spans 740 residues: ATP-dependent RNA helicase DDX1 (740 aa).

The segment at 1–295 is necessary for interaction with HNRNPK; that stretch reads MAAFSEMGVM…APKALIVEPS (295 aa). Residues 1–448 are interaction with dsRNA; sequence MAAFSEMGVM…DTVHHVVVPV (448 aa). A necessary for interaction with RELA region spans residues 1–525; sequence MAAFSEMGVM…KIDCDNLEQY (525 aa). The region spanning 2–428 is the Helicase ATP-binding domain; the sequence is AAFSEMGVMP…SEKIMHFPTW (427 aa). 46 to 53 contacts ATP; that stretch reads AETGSGKT. In terms of domain architecture, B30.2/SPRY spans 70–247; it reads DQQEGKKGKT…LKFNFGEEEF (178 aa). 2 positions are modified to N6-acetyllysine: lysine 239 and lysine 268. Lysine 281 carries the post-translational modification N6-acetyllysine; alternate. Residue lysine 281 forms a Glycyl lysine isopeptide (Lys-Gly) (interchain with G-Cter in SUMO2); alternate linkage. The short motif at 370-373 is the DEAD box element; the sequence is DEAD. Serine 481 is subject to Phosphoserine. In terms of domain architecture, Helicase C-terminal spans 493–681; sequence KGEYAVRAIK…QVEPDIKVPV (189 aa). Residues 525 to 740 are necessary for interaction with HNRNPK; sequence YFMQQGGGPD…YLPNQLFRTF (216 aa).

Belongs to the DEAD box helicase family. DDX1 subfamily. In terms of assembly, found in a multi-helicase-TICAM1 complex at least composed of DHX36, DDX1, DDX21 and TICAM1; this complex exists in resting cells with or without poly(I:C) RNA ligand stimulation. Interacts with DHX36. Interacts (via B30.2/SPRY domain) with DDX21 (via N-terminus); this interaction serves as bridges to TICAM1. Interacts with FAM98A (via N- and C-terminus). Interacts with PHF5A (via C-terminus). Interacts with MBNL1. Interacts with CSTF2. Interacts with HNRNPK. Interacts with ATM. Interacts with RELA (via C-terminus). Component of the tRNA-splicing ligase complex. Interacts with PQBP1. Interacts with ERCC6. In terms of processing, phosphorylated by ATM kinase; phosphorylation is increased in response to ionizing radiation (IR).

The protein resides in the nucleus. It is found in the cytoplasm. It localises to the cytoplasmic granule. The protein localises to the cytosol. Its subcellular location is the mitochondrion. It carries out the reaction ATP + H2O = ADP + phosphate + H(+). In terms of biological role, acts as an ATP-dependent RNA helicase, able to unwind both RNA-RNA and RNA-DNA duplexes. Possesses 5' single-stranded RNA overhang nuclease activity. Possesses ATPase activity on various RNA, but not DNA polynucleotides. May play a role in RNA clearance at DNA double-strand breaks (DSBs), thereby facilitating the template-guided repair of transcriptionally active regions of the genome. Together with RELA, acts as a coactivator to enhance NF-kappa-B-mediated transcriptional activation. Acts as a positive transcriptional regulator of cyclin CCND2 expression. Binds to the cyclin CCND2 promoter region. Associates with chromatin at the NF-kappa-B promoter region via association with RELA. Binds to poly(A) RNA. May be involved in 3'-end cleavage and polyadenylation of pre-mRNAs. Component of the tRNA-splicing ligase complex required to facilitate the enzymatic turnover of catalytic subunit RTCB: together with archease (ZBTB8OS), acts by facilitating the guanylylation of RTCB, a key intermediate step in tRNA ligation. Component of a multi-helicase-TICAM1 complex that acts as a cytoplasmic sensor of viral double-stranded RNA (dsRNA) and plays a role in the activation of a cascade of antiviral responses including the induction of pro-inflammatory cytokines via the adapter molecule TICAM1. Specifically binds (via helicase ATP-binding domain) on both short and long poly(I:C) dsRNA. In Macaca fascicularis (Crab-eating macaque), this protein is ATP-dependent RNA helicase DDX1 (DDX1).